The sequence spans 155 residues: MRLRLIAVGSRMPRWVEEGWHEYARRLPPELALELLEIPLHTRSKNADVARLIRQEGEAMLGKVQPGERIVTLEVAGKSWSTEQLAAELERWRLDARTVNLMVGGPEGLAPEVCARSEQRWSLSPLTLPHPLVRILIGEQLYRAWTLLSGHPYHK.

Residues leucine 73, glycine 104, and 123–128 (LSPLTL) contribute to the S-adenosyl-L-methionine site.

It belongs to the RNA methyltransferase RlmH family. As to quaternary structure, homodimer.

The protein resides in the cytoplasm. The enzyme catalyses pseudouridine(1915) in 23S rRNA + S-adenosyl-L-methionine = N(3)-methylpseudouridine(1915) in 23S rRNA + S-adenosyl-L-homocysteine + H(+). Its function is as follows. Specifically methylates the pseudouridine at position 1915 (m3Psi1915) in 23S rRNA. This Azotobacter vinelandii (strain DJ / ATCC BAA-1303) protein is Ribosomal RNA large subunit methyltransferase H.